Consider the following 122-residue polypeptide: MKAGRYEYRWADGTTMVSAPEYVELLMNWIETQIDNEHIFPKKTGEPFPPNFEDFVKRILRKLFRVYAHIYHSHFPKIVTLNEQAHLNTCFHRYLLFVSEFQLVDKEEMVPIQKLVETILKP.

Zn(2+) contacts are provided by His-69 and His-74.

This sequence belongs to the MOB1/phocein family.

The protein localises to the nucleus. It is found in the cytoplasm. It localises to the cytoskeleton. Its subcellular location is the phragmoplast. The polypeptide is Putative MOB kinase activator-like 2B (Arabidopsis thaliana (Mouse-ear cress)).